The primary structure comprises 443 residues: Thymidine phosphorylase (443 aa).

It belongs to the thymidine/pyrimidine-nucleoside phosphorylase family. In terms of assembly, homodimer.

It catalyses the reaction thymidine + phosphate = 2-deoxy-alpha-D-ribose 1-phosphate + thymine. The protein operates within pyrimidine metabolism; dTMP biosynthesis via salvage pathway; dTMP from thymine: step 1/2. Its function is as follows. The enzymes which catalyze the reversible phosphorolysis of pyrimidine nucleosides are involved in the degradation of these compounds and in their utilization as carbon and energy sources, or in the rescue of pyrimidine bases for nucleotide synthesis. The polypeptide is Thymidine phosphorylase (Aliivibrio fischeri (strain ATCC 700601 / ES114) (Vibrio fischeri)).